Consider the following 269-residue polypeptide: Thymidylate synthase (269 aa).

Arg-26 provides a ligand contact to dUMP. His-56 contacts (6R)-5,10-methylene-5,6,7,8-tetrahydrofolate. 131-132 (RR) lines the dUMP pocket. Cys-151 serves as the catalytic Nucleophile. DUMP-binding positions include 171-174 (RSAD), Asn-182, and 212-214 (HIY). Asp-174 provides a ligand contact to (6R)-5,10-methylene-5,6,7,8-tetrahydrofolate. Ala-268 is a (6R)-5,10-methylene-5,6,7,8-tetrahydrofolate binding site.

Belongs to the thymidylate synthase family. Bacterial-type ThyA subfamily. As to quaternary structure, homodimer.

The protein localises to the cytoplasm. It carries out the reaction dUMP + (6R)-5,10-methylene-5,6,7,8-tetrahydrofolate = 7,8-dihydrofolate + dTMP. It functions in the pathway pyrimidine metabolism; dTTP biosynthesis. In terms of biological role, catalyzes the reductive methylation of 2'-deoxyuridine-5'-monophosphate (dUMP) to 2'-deoxythymidine-5'-monophosphate (dTMP) while utilizing 5,10-methylenetetrahydrofolate (mTHF) as the methyl donor and reductant in the reaction, yielding dihydrofolate (DHF) as a by-product. This enzymatic reaction provides an intracellular de novo source of dTMP, an essential precursor for DNA biosynthesis. The polypeptide is Thymidylate synthase (Leifsonia xyli subsp. xyli (strain CTCB07)).